We begin with the raw amino-acid sequence, 359 residues long: Trans-enoyl reductase FSL5 (359 aa).

Isoleucine 47–lysine 50 serves as a coordination point for NADP(+). Serine 134–leucine 141 is a binding site for substrate. NADP(+) is bound by residues serine 169–threonine 172, serine 192–asparagine 195, tyrosine 210, and leucine 257–glutamate 258. Residue glycine 277 to leucine 281 coordinates substrate. Valine 346–serine 347 contributes to the NADP(+) binding site.

It belongs to the zinc-containing alcohol dehydrogenase family. In terms of assembly, monomer.

Its pathway is secondary metabolite biosynthesis. Trans-enoyl reductase; part of the gene cluster that mediates the biosynthesis of fusarielins F, G and H, decaketide compounds with 5 methylations and a decaline core that act as mycoestrogens as they stimulate growth of MCF-7 breast cancer cells. The initial compound in the pathway is produced by the reducing polyketide synthase FSL1. FSL1 lacks an active enoyl reductase (ER) domain and biosynthesis of fusarielins relies on the trans-acting enoyl reductase FSL5, before it is released through hydrolysis catalyzed by the thioesterase FSL2. Fusarielins F, G, and H have a C11=C12 cis double bond and is fully reduced between C10 and C11 and between C12 and C13. FSL3 can be involved in the formation of the C11=C12 cis double bond by moving a hypothetical C10=C11 or C12=C13 trans double bond to form prefusarielin. Prefusarielin is oxygenated at C15 and C16 by the cytochrome P450 monooxygenase FSL4, resulting in fusarielin F, which subsequently is epoxidized into fusarielin G by the same enzyme. The final step in the pathway is a reduction of the carboxylic acid moiety to yield fusarielin H via a still undetermined mechanism. This chain is Trans-enoyl reductase FSL5, found in Gibberella zeae (strain ATCC MYA-4620 / CBS 123657 / FGSC 9075 / NRRL 31084 / PH-1) (Wheat head blight fungus).